We begin with the raw amino-acid sequence, 295 residues long: ATP synthase gamma chain (295 aa).

The protein belongs to the ATPase gamma chain family. As to quaternary structure, F-type ATPases have 2 components, CF(1) - the catalytic core - and CF(0) - the membrane proton channel. CF(1) has five subunits: alpha(3), beta(3), gamma(1), delta(1), epsilon(1). CF(0) has three main subunits: a, b and c.

It is found in the cell membrane. In terms of biological role, produces ATP from ADP in the presence of a proton gradient across the membrane. The gamma chain is believed to be important in regulating ATPase activity and the flow of protons through the CF(0) complex. This is ATP synthase gamma chain from Acetivibrio thermocellus (strain ATCC 27405 / DSM 1237 / JCM 9322 / NBRC 103400 / NCIMB 10682 / NRRL B-4536 / VPI 7372) (Clostridium thermocellum).